The chain runs to 252 residues: 2-succinyl-6-hydroxy-2,4-cyclohexadiene-1-carboxylate synthase (252 aa).

This sequence belongs to the AB hydrolase superfamily. MenH family. As to quaternary structure, monomer.

It catalyses the reaction 5-enolpyruvoyl-6-hydroxy-2-succinyl-cyclohex-3-ene-1-carboxylate = (1R,6R)-6-hydroxy-2-succinyl-cyclohexa-2,4-diene-1-carboxylate + pyruvate. Its pathway is quinol/quinone metabolism; 1,4-dihydroxy-2-naphthoate biosynthesis; 1,4-dihydroxy-2-naphthoate from chorismate: step 3/7. It participates in quinol/quinone metabolism; menaquinone biosynthesis. Functionally, catalyzes a proton abstraction reaction that results in 2,5-elimination of pyruvate from 2-succinyl-5-enolpyruvyl-6-hydroxy-3-cyclohexene-1-carboxylate (SEPHCHC) and the formation of 2-succinyl-6-hydroxy-2,4-cyclohexadiene-1-carboxylate (SHCHC). This is 2-succinyl-6-hydroxy-2,4-cyclohexadiene-1-carboxylate synthase from Salmonella typhimurium (strain LT2 / SGSC1412 / ATCC 700720).